The sequence spans 226 residues: Ribonuclease HII (226 aa).

In terms of domain architecture, RNase H type-2 spans 24–216 (QRLCGVDEAG…VRKVLERGMV (193 aa)). A divalent metal cation-binding residues include Asp30, Glu31, and Asp125.

This sequence belongs to the RNase HII family. Requires Mn(2+) as cofactor. Mg(2+) serves as cofactor.

It is found in the cytoplasm. It carries out the reaction Endonucleolytic cleavage to 5'-phosphomonoester.. Endonuclease that specifically degrades the RNA of RNA-DNA hybrids. This is Ribonuclease HII from Cupriavidus metallidurans (strain ATCC 43123 / DSM 2839 / NBRC 102507 / CH34) (Ralstonia metallidurans).